A 1447-amino-acid polypeptide reads, in one-letter code: DNA-directed RNA polymerase subunit beta' (1447 aa).

Residues Cys-70, Cys-72, Cys-85, and Cys-88 each coordinate Zn(2+). Positions 460, 462, and 464 each coordinate Mg(2+). Residues Cys-890, Cys-964, Cys-971, and Cys-974 each contribute to the Zn(2+) site.

This sequence belongs to the RNA polymerase beta' chain family. The RNAP catalytic core consists of 2 alpha, 1 beta, 1 beta' and 1 omega subunit. When a sigma factor is associated with the core the holoenzyme is formed, which can initiate transcription. Requires Mg(2+) as cofactor. Zn(2+) is required as a cofactor.

It carries out the reaction RNA(n) + a ribonucleoside 5'-triphosphate = RNA(n+1) + diphosphate. Its function is as follows. DNA-dependent RNA polymerase catalyzes the transcription of DNA into RNA using the four ribonucleoside triphosphates as substrates. In Desulfosudis oleivorans (strain DSM 6200 / JCM 39069 / Hxd3) (Desulfococcus oleovorans), this protein is DNA-directed RNA polymerase subunit beta'.